The chain runs to 499 residues: Putative ribose/galactose/methyl galactoside import ATP-binding protein 3 (499 aa).

ABC transporter domains lie at Leu-8–Glu-243 and Ser-253–Glu-497. Gly-40–Ser-47 provides a ligand contact to ATP.

It belongs to the ABC transporter superfamily. Carbohydrate importer 2 (CUT2) (TC 3.A.1.2) family.

The protein resides in the cell inner membrane. The catalysed reaction is D-ribose(out) + ATP + H2O = D-ribose(in) + ADP + phosphate + H(+). The enzyme catalyses D-galactose(out) + ATP + H2O = D-galactose(in) + ADP + phosphate + H(+). Functionally, part of an ABC transporter complex involved in carbohydrate import. Could be involved in ribose, galactose and/or methyl galactoside import. Responsible for energy coupling to the transport system. In Agrobacterium fabrum (strain C58 / ATCC 33970) (Agrobacterium tumefaciens (strain C58)), this protein is Putative ribose/galactose/methyl galactoside import ATP-binding protein 3.